The chain runs to 563 residues: GTPase Obg (563 aa).

Positions 2–168 (SDFVDRVTVH…RDVILELKSI (167 aa)) constitute an Obg domain. In terms of domain architecture, OBG-type G spans 169–349 (ADVALVGFPS…LNFALSALVH (181 aa)). GTP is bound by residues 175–182 (GFPSAGKS), 200–204 (FTTLV), 221–224 (DVPG), 301–304 (NKID), and 330–332 (STA). S182 and T202 together coordinate Mg(2+). The OCT domain maps to 383 to 469 (DEGGSALEFT…ARMVEFDWDP (87 aa)). Residues 529–563 (RKAGHWADPTVDDDRHDETSLFGHGESSEDGETEE) are disordered.

It belongs to the TRAFAC class OBG-HflX-like GTPase superfamily. OBG GTPase family. In terms of assembly, monomer. It depends on Mg(2+) as a cofactor.

It localises to the cytoplasm. Its function is as follows. An essential GTPase which binds GTP, GDP and possibly (p)ppGpp with moderate affinity, with high nucleotide exchange rates and a fairly low GTP hydrolysis rate. Plays a role in control of the cell cycle, stress response, ribosome biogenesis and in those bacteria that undergo differentiation, in morphogenesis control. The chain is GTPase Obg from Bifidobacterium longum (strain NCC 2705).